Here is a 261-residue protein sequence, read N- to C-terminus: Endomucin (261 aa).

A signal peptide spans 1–18 (MELLQVTILFLLPSICSS). N19, N28, N98, and N104 each carry an N-linked (GlcNAc...) asparagine glycan. At 19 to 190 (NSTGVLEAAN…TSATSRSYSS (172 aa)) the chain is on the extracellular side. Polar residues-rich tracts occupy residues 118–134 (TLQS…SIKT) and 146–171 (ASPS…SQVI). The segment at 118–183 (TLQSSKPKTE…EGGKNASTSA (66 aa)) is disordered. 2 N-linked (GlcNAc...) asparagine glycosylation sites follow: N164 and N178. The chain crosses the membrane as a helical span at residues 191-211 (IILPVVIALIVITLSVFVLVG). Topologically, residues 212-261 (LYRMCWKADPGTPENGNDQPQSDKESVKLLTVKTISHESGEHSAQGKTKN) are cytoplasmic. Position 237 is a phosphoserine (S237).

In terms of processing, highly O-glycosylated. Sialic acid-rich glycoprotein. Expressed in heart, kidney and lung.

Its subcellular location is the cell membrane. It localises to the membrane. The protein localises to the secreted. Its function is as follows. Endothelial sialomucin, also called endomucin or mucin-like sialoglycoprotein, which interferes with the assembly of focal adhesion complexes and inhibits interaction between cells and the extracellular matrix. In Homo sapiens (Human), this protein is Endomucin (EMCN).